Reading from the N-terminus, the 217-residue chain is Probable transaldolase (217 aa).

The Schiff-base intermediate with substrate role is filled by Lys-83.

This sequence belongs to the transaldolase family. Type 3B subfamily.

It is found in the cytoplasm. The enzyme catalyses D-sedoheptulose 7-phosphate + D-glyceraldehyde 3-phosphate = D-erythrose 4-phosphate + beta-D-fructose 6-phosphate. The protein operates within carbohydrate degradation; pentose phosphate pathway; D-glyceraldehyde 3-phosphate and beta-D-fructose 6-phosphate from D-ribose 5-phosphate and D-xylulose 5-phosphate (non-oxidative stage): step 2/3. Functionally, transaldolase is important for the balance of metabolites in the pentose-phosphate pathway. The chain is Probable transaldolase from Anaeromyxobacter dehalogenans (strain 2CP-C).